Here is a 136-residue protein sequence, read N- to C-terminus: Large ribosomal subunit protein uL16 (136 aa).

Belongs to the universal ribosomal protein uL16 family. As to quaternary structure, part of the 50S ribosomal subunit.

Functionally, binds 23S rRNA and is also seen to make contacts with the A and possibly P site tRNAs. The chain is Large ribosomal subunit protein uL16 from Citrobacter koseri (strain ATCC BAA-895 / CDC 4225-83 / SGSC4696).